A 306-amino-acid polypeptide reads, in one-letter code: Homoserine kinase (306 aa).

91–101 (PLARGLGSSAT) provides a ligand contact to ATP.

This sequence belongs to the GHMP kinase family. Homoserine kinase subfamily.

The protein resides in the cytoplasm. It carries out the reaction L-homoserine + ATP = O-phospho-L-homoserine + ADP + H(+). It functions in the pathway amino-acid biosynthesis; L-threonine biosynthesis; L-threonine from L-aspartate: step 4/5. Its function is as follows. Catalyzes the ATP-dependent phosphorylation of L-homoserine to L-homoserine phosphate. This chain is Homoserine kinase, found in Synechocystis sp. (strain ATCC 27184 / PCC 6803 / Kazusa).